The primary structure comprises 495 residues: MCVRLARNLFKTSDFIPCRRVILAVSGGSDSLALMFLVKEYLETLLIPPEIIAVTVDHQLRKESAREAEIVAEICRDHHIKHITVRWEGKKPKTHLAFSARIARYDLLVQEAQKQGASLIMTGHTLNDQVETYQMRCQRLQKRRGALRDEVGAMCDGGAASGFAGALRDKAGARRDEDYVRETRKNIAEKSYGVLYERGLSCIPREALLHRKVRLIRPLLGVQRQTLRNYLRLQGKTWIDDPTNEDRNFERVRVRQSLSSQKLVNIAQKINKAAWQRRQQAQNIADLILALDITVQYGRCFIVKPAPFLQKHSCFPFVVGLFAVLMGGGFYLLSNQKLSMLVQKLCLNSPEKRRFTCAGCVIEYNKEGIALWRERRNMKEALVEPDETLLWDGRYRITNHGSEAIKVGVANLEQLKSLLQNSNSNLEKPHFPSLQSLLMLSNDKGCDIPELISQAIIHKNVIIKRIMAPFDWLSSREDAALVNVVEPFFNLEVKR.

ATP is bound at residue 26 to 31 (SGGSDS).

It belongs to the tRNA(Ile)-lysidine synthase family.

The protein resides in the cytoplasm. It carries out the reaction cytidine(34) in tRNA(Ile2) + L-lysine + ATP = lysidine(34) in tRNA(Ile2) + AMP + diphosphate + H(+). In terms of biological role, ligates lysine onto the cytidine present at position 34 of the AUA codon-specific tRNA(Ile) that contains the anticodon CAU, in an ATP-dependent manner. Cytidine is converted to lysidine, thus changing the amino acid specificity of the tRNA from methionine to isoleucine. The sequence is that of tRNA(Ile)-lysidine synthase from Bartonella tribocorum (strain CIP 105476 / IBS 506).